The sequence spans 32 residues: uncharacterized protein (32 aa).

This is an uncharacterized protein from Mastigocladus laminosus (Fischerella sp.).